Consider the following 540-residue polypeptide: Chaperonin GroEL (540 aa).

ATP-binding positions include 30–33, lysine 51, 87–91, glycine 415, and aspartate 495; these read TLGP and DGTTT.

The protein belongs to the chaperonin (HSP60) family. In terms of assembly, forms a cylinder of 14 subunits composed of two heptameric rings stacked back-to-back. Interacts with the co-chaperonin GroES.

It localises to the cytoplasm. The enzyme catalyses ATP + H2O + a folded polypeptide = ADP + phosphate + an unfolded polypeptide.. Together with its co-chaperonin GroES, plays an essential role in assisting protein folding. The GroEL-GroES system forms a nano-cage that allows encapsulation of the non-native substrate proteins and provides a physical environment optimized to promote and accelerate protein folding. This chain is Chaperonin GroEL, found in Serratia marcescens.